Here is a 633-residue protein sequence, read N- to C-terminus: DNA mismatch repair protein MutL (633 aa).

It belongs to the DNA mismatch repair MutL/HexB family.

Functionally, this protein is involved in the repair of mismatches in DNA. It is required for dam-dependent methyl-directed DNA mismatch repair. May act as a 'molecular matchmaker', a protein that promotes the formation of a stable complex between two or more DNA-binding proteins in an ATP-dependent manner without itself being part of a final effector complex. This Macrococcus caseolyticus (strain JCSC5402) (Macrococcoides caseolyticum) protein is DNA mismatch repair protein MutL.